Reading from the N-terminus, the 419-residue chain is Histidine--tRNA ligase (419 aa).

It belongs to the class-II aminoacyl-tRNA synthetase family. In terms of assembly, homodimer.

The protein localises to the cytoplasm. It catalyses the reaction tRNA(His) + L-histidine + ATP = L-histidyl-tRNA(His) + AMP + diphosphate + H(+). This Caldicellulosiruptor saccharolyticus (strain ATCC 43494 / DSM 8903 / Tp8T 6331) protein is Histidine--tRNA ligase.